We begin with the raw amino-acid sequence, 312 residues long: Zinc finger CCCH domain-containing protein 25 (312 aa).

Residues 36-114 (AYVFVGGIPY…RIVRVDHVSK (79 aa)) enclose the RRM domain. Residues 130–157 (REARGVCYAFQKGECNRGASCRYSHDEQ) form a C3H1-type zinc finger. Positions 153 to 312 (SHDEQRNANT…DSERYRKSRR (160 aa)) are disordered. Composition is skewed to basic and acidic residues over residues 166–184 (SKEE…EPPM), 197–210 (RFPD…KSTG), and 219–312 (EAYK…KSRR).

This is Zinc finger CCCH domain-containing protein 25 from Oryza sativa subsp. japonica (Rice).